The chain runs to 454 residues: uncharacterized protein (454 aa).

Residues 1–25 (MHGPTSKAISRNVRSVKRPRRAPRP) form a disordered region. Basic residues predominate over residues 14–23 (RSVKRPRRAP).

It localises to the cytoplasm. The protein localises to the nucleus. This is an uncharacterized protein from Saccharomyces cerevisiae (strain ATCC 204508 / S288c) (Baker's yeast).